Consider the following 377-residue polypeptide: Guanine nucleotide-binding protein subunit alpha-13 (377 aa).

S-palmitoyl cysteine attachment occurs at residues C14 and C18. The G-alpha domain maps to 47–377; that stretch reads RLVKILLLGA…HDNLKQLMLQ (331 aa). The interval 50–63 is G1 motif; it reads KILLLGAGESGKST. GTP is bound by residues 58–63, S173, and 197–200; these read ESGKST and LLAR. S62 lines the Mg(2+) pocket. The tract at residues 195-203 is G2 motif; it reads DILLARRPT. T203 lines the Mg(2+) pocket. A Phosphothreonine; by PKA modification is found at T203. Residues 218 to 227 are G3 motif; that stretch reads FKMVDVGGQR. The interval 287-294 is G4 motif; that stretch reads ILFLNKTD. Residues 291-294 and A349 each bind GTP; that span reads NKTD. The segment at 347–352 is G5 motif; the sequence is TTAINT.

Belongs to the G-alpha family. G(12) subfamily. In terms of assembly, g proteins are composed of 3 units; alpha, beta and gamma. The alpha chain contains the guanine nucleotide binding site. Interacts with UBXD5. Interacts with HAX1. Interacts (in GTP-bound form) with PPP5C (via TPR repeats); activates PPP5C phosphatase activity and translocates PPP5C to the cell membrane. Interacts with RGS22. Interacts with ARHGEF1. Interacts (in GTP-bound form) with ARHGEF11 (via RGS domain). Interacts (in GTP-bound form) with ARHGEF12 (via RGS domain). Interacts (in GTP-bound form) with CTNND1. Interacts with GAS2L2. Interacts with GPR35. Interacts with GPR174. Post-translationally, palmitoylation is critical for proper membrane localization and signaling. In terms of processing, phosphorylation on Thr-203 by PKA destabilizes the heterotrimer of alpha, beta and gamma, and inhibits Rho activation.

The protein resides in the membrane. It is found in the melanosome. Its subcellular location is the cytoplasm. The protein localises to the nucleus. Its function is as follows. Guanine nucleotide-binding proteins (G proteins) are involved as modulators or transducers in various transmembrane signaling systems. Activates effector molecule RhoA by binding and activating RhoGEFs (ARHGEF1/p115RhoGEF, ARHGEF11/PDZ-RhoGEF and ARHGEF12/LARG). GNA13-dependent Rho signaling subsequently regulates transcription factor AP-1 (activating protein-1). Promotes tumor cell invasion and metastasis by activating RhoA/ROCK signaling pathway. Inhibits CDH1-mediated cell adhesion in process independent from Rho activation. In lymphoid follicles, transmits P2RY8- and S1PR2-dependent signals that lead to inhibition of germinal center (GC) B cell growth and migration outside the GC niche. The chain is Guanine nucleotide-binding protein subunit alpha-13 (Gna13) from Rattus norvegicus (Rat).